Reading from the N-terminus, the 1603-residue chain is Transcription factor Gibbin (1603 aa).

Disordered stretches follow at residues 19 to 108, 150 to 236, 264 to 285, and 394 to 467; these read PDYL…SSSR, LRLS…STDY, LEPPSPEPEPQLLDPQPRFLDP, and CRRR…RKGK. Residues 30 to 47 show a composition bias toward pro residues; it reads GGPPTPRPLLPTRPPASP. N6-acetyllysine is present on lysine 79. Polar residues predominate over residues 166–178; it reads SFFSSPSLANSIR. Residues 179–194 are compositionally biased toward basic and acidic residues; the sequence is SPEERATPHAKSERPS. Residues 216–225 are compositionally biased toward low complexity; that stretch reads PGATAAATGL. Position 268 is a phosphoserine (serine 268). Residues 273–285 show a composition bias toward low complexity; that stretch reads PQLLDPQPRFLDP. Positions 396–408 form a DNA-binding region, a.T hook 1; the sequence is RRKAGRGRKADAG. A compositionally biased stretch (pro residues) spans 428–446; that stretch reads EPPPPPPPPPPALPGPGPV. The a.T hook 2 DNA-binding region spans 544–556; sequence KRKRGRPPKNLLL. The segment at 581-607 is disordered; sequence MPEVKKRRRRKQKLASPQPSYAADAND. Serine 596 bears the Phosphoserine mark. A Glycyl lysine isopeptide (Lys-Gly) (interchain with G-Cter in SUMO2) cross-link involves residue lysine 609. 2 disordered regions span residues 717-792 and 806-827; these read LTEL…RNCG and LESGASGRGSYYSTGAPSGQTE. The span at 737-746 shows a compositional bias: basic residues; it reads KPKRKRRSRK. The span at 816–827 shows a compositional bias: polar residues; sequence YYSTGAPSGQTE. Residues serine 829 and serine 846 each carry the phosphoserine modification. Arginine 891 is modified (omega-N-methylarginine). Serine 896 and serine 1064 each carry phosphoserine. Disordered stretches follow at residues 1159 to 1198 and 1253 to 1286; these read VSETFSESSSDSTQFNQPVGGGGFRRANSEASSSEGQSSL and ASAAASGYPSKRSTGPRQPRGGRGGGACSAKKER. 2 stretches are compositionally biased toward low complexity: residues 1160 to 1171 and 1187 to 1198; these read SETFSESSSDST and SEASSSEGQSSL. Phosphoserine is present on serine 1187. Residues serine 1322, serine 1324, and serine 1399 each carry the phosphoserine modification. Position 1401 is a phosphothreonine (threonine 1401). Position 1403 is a phosphoserine (serine 1403). A Glycyl lysine isopeptide (Lys-Gly) (interchain with G-Cter in SUMO2) cross-link involves residue lysine 1409. The segment at 1503-1533 is disordered; that stretch reads PHLASPPATPKADKEPLEMARPPGPPRGPAA. Serine 1507 and serine 1549 each carry phosphoserine.

Its subcellular location is the nucleus. The protein localises to the chromosome. Functionally, transcription factor required for the proper patterning of the epidermis, which plays a key role in early epithelial morphogenesis. Directly binds promoter and enhancer regions and acts by maintaining local enhancer-promoter chromatin architecture. Interacts with many sequence-specific zinc-finger transcription factors and methyl-CpG-binding proteins to regulate the expression of mesoderm genes that wire surface ectoderm stratification. The chain is Transcription factor Gibbin from Homo sapiens (Human).